The primary structure comprises 334 residues: Immune-associated nucleotide-binding protein 3 (334 aa).

Residues 11–219 (KAVKNIVLVG…FRGKMYLEIK (209 aa)) enclose the AIG1-type G domain. Positions 20–27 (GRTGNGKS) are G1. GTP-binding positions include 20-28 (GRTGNGKSA) and Ser-41. Residues 47–51 (GVTKT) are G2. A G3 region spans residues 69-72 (DTPG). A G4 region spans residues 139-142 (TGGD). Residues 178–180 (NNM) are G5. Residue Asn-179 coordinates GTP. The stretch at 272-306 (SAAHERMVSMLNENLENAHRENIDLRKAHDHEQKK) forms a coiled coil.

Belongs to the TRAFAC class TrmE-Era-EngA-EngB-Septin-like GTPase superfamily. AIG1/Toc34/Toc159-like paraseptin GTPase family. IAN subfamily. In terms of tissue distribution, mostly expressed in pollen. Also detected in lateral roots and radicles.

This is Immune-associated nucleotide-binding protein 3 from Arabidopsis thaliana (Mouse-ear cress).